The primary structure comprises 394 residues: tRNA-specific adenosine deaminase 1 (394 aa).

Positions Ser-54–Phe-388 constitute an A to I editase domain. His-78 provides a ligand contact to Zn(2+). Residue Glu-80 is the Proton donor of the active site. 1D-myo-inositol hexakisphosphate is bound by residues Arg-84 and Arg-85. 2 residues coordinate Zn(2+): Cys-127 and Cys-191. The 1D-myo-inositol hexakisphosphate site is built by Lys-194, Arg-197, Lys-320, Lys-357, and Lys-381.

Belongs to the ADAT1 family. 1D-myo-inositol hexakisphosphate is required as a cofactor. In terms of tissue distribution, widely expressed in early embryos, and later concentrates in the central nervous system.

It catalyses the reaction adenosine(37) in tRNA(Ala) + H2O + H(+) = inosine(37) in tRNA(Ala) + NH4(+). Functionally, specifically deaminates adenosine-37 to inosine in tRNA-Ala. In Drosophila melanogaster (Fruit fly), this protein is tRNA-specific adenosine deaminase 1.